Here is a 319-residue protein sequence, read N- to C-terminus: Forkhead box protein B1 (319 aa).

The segment at residues Lys-13–Lys-107 is a DNA-binding region (fork-head). Residues Leu-278–Ser-310 are disordered. Positions Ser-279 to Thr-305 are enriched in low complexity.

In terms of tissue distribution, in early gastrulae, expressed in the inner layer of the posterior dorsal ectoderm and in non-involuted mesoderm. By the mid-gastrula stage, expressed solely in the posterior ectoderm. At the end of gastrulation, expressed in ectodermal regions fated to become diencephalon, midbrain and hindbrain, and weakly expressed in regions fated to become spinal cord and tailbud. At the neurula stage, expressed in the midbrain and posterior forebrain (diencephalon) but not in the more anterior forebrain (telencephalon). Also expressed posteriorly in rhombomere 5. At tailbud stages, expression remains in the anterior brain and is also detectable along the length of the central nervous system and in the tailbud.

It localises to the nucleus. Functionally, probable transcription factor. May be involved in the early anteroposterior patterning of the neuroectoderm. This chain is Forkhead box protein B1, found in Xenopus laevis (African clawed frog).